The following is a 263-amino-acid chain: Proteasome subunit alpha type-1 (263 aa).

The residue at position 1 (Met-1) is an N-acetylmethionine. A Phosphoserine; alternate modification is found at Ser-110. O-linked (GlcNAc) serine; alternate glycosylation is present at Ser-110. A Glycyl lysine isopeptide (Lys-Gly) (interchain with G-Cter in ubiquitin) cross-link involves residue Lys-115. Ser-177 carries the post-translational modification Phosphoserine. A Glycyl lysine isopeptide (Lys-Gly) (interchain with G-Cter in ubiquitin) cross-link involves residue Lys-208. The disordered stretch occupies residues 232 to 263 (FLEGLEERPQRKAQPAQPADEPAEKADEPMEH). Over residues 253–263 (PAEKADEPMEH) the composition is skewed to basic and acidic residues.

It belongs to the peptidase T1A family. In terms of assembly, the 26S proteasome consists of a 20S proteasome core and two 19S regulatory subunits. The 20S proteasome core is a barrel-shaped complex made of 28 subunits that are arranged in four stacked rings. The two outer rings are each formed by seven alpha subunits, and the two inner rings are formed by seven beta subunits. The proteolytic activity is exerted by three beta-subunits PSMB5, PSMB6 and PSMB7. Interacts with NOTCH3. Interacts with ZFAND1.

The protein resides in the cytoplasm. The protein localises to the nucleus. Functionally, component of the 20S core proteasome complex involved in the proteolytic degradation of most intracellular proteins. This complex plays numerous essential roles within the cell by associating with different regulatory particles. Associated with two 19S regulatory particles, forms the 26S proteasome and thus participates in the ATP-dependent degradation of ubiquitinated proteins. The 26S proteasome plays a key role in the maintenance of protein homeostasis by removing misfolded or damaged proteins that could impair cellular functions, and by removing proteins whose functions are no longer required. Associated with the PA200 or PA28, the 20S proteasome mediates ubiquitin-independent protein degradation. This type of proteolysis is required in several pathways including spermatogenesis (20S-PA200 complex) or generation of a subset of MHC class I-presented antigenic peptides (20S-PA28 complex). The protein is Proteasome subunit alpha type-1 of Homo sapiens (Human).